Reading from the N-terminus, the 1077-residue chain is MPKRTDIKSILILGAGPIVIGQACEFDYSGAQACKALREEGYRVILVNSNLATIMTDPEMADATYIEPIHWEVVRKIIEKERPDAVLPTMGGQTALNCALELERQGVLAEFGVTMIGATADAIDKAEDRRRFDIAMKKIGLDTARSGIAHNMEEALAVAADVGFPCIIRPSFTMGGTGGGIAYNREEFEEICERGLDLSPTKELLIDESLIGWKEYEMEVVRDKNDNCIIVCSIENFDAMGIHTGDSITVAPAQTLTDKEYQIMRNASMAVLREIGVETGGSNVQFSVNPKNGRLIVIEMNPRVSRSSALASKATGFPIAKIAAKLAVGYTLDELMNDITGGRTPASFEPSIDYVVTKIPRFNFEKFAGANDRLTTQMKSVGEVMAIGRTQQESLQKALRGLEVGATGFDPKVSLDDPEALTKIRRELKEAGAERIWYIADAFRAGMSVDGVFNLTNVDRWFLVQIEELVRLEESVAELGINGLTAEFMRHLKRKGFADARLAKLVGAAESEVRKLRYKYGLHPVYKRVDTCAAEFSTDTAYMYSTYEEECESNPTSDRPKVMVLGGGPNRIGQGIEFDYCCVHASLALREDGYETIMVNCNPETVSTDYDTSDRLYFESVTLEDVLEIVRIEKPQGVIVQYGGQTPLKLARELEAAGVPIIGTSPDAIDRAEDRERFQQAVNRLGLKQPANATVATIEQAVEKATGLGYPLVVRPSYVLGGRAMEIVYDEIDLRRYFQNAVSVSNDAPVLLDRFLDDAVEVDVDAICDGERVLIGGIMEHIEQAGVHSGDSACSLPAYTLSKEIQDVMRQQVEKLAFELCVRGLMNVQFAVKNNEVYLIEVNPRAARTVPFVSKATGMPLAKIAARVMVGQSLAEQGMLEEIIPPYYSVKEVVLPFNKFPGVDPILGPEMRSTGEVMGVGRTFAEAFSKAMLGSQSGMKKSGRALLSVREGDKHRVVDLAAKLLKQGFELDATHGTAVVLGEAGINPRLVNKVHEGRPHIQDRIKNGEYTYIVNTTAGRQAIEDSKLIRRSALQYKVHYDTTLNGGFATAMALNADPTDQVISVQEMHAKIKNMKA.

The tract at residues 2 to 403 is carboxyphosphate synthetic domain; the sequence is PKRTDIKSIL…SLQKALRGLE (402 aa). Arginine 129, arginine 169, glycine 175, glycine 176, glutamate 208, leucine 210, glutamate 215, glycine 241, isoleucine 242, histidine 243, glutamine 285, and glutamate 299 together coordinate ATP. An ATP-grasp 1 domain is found at 133–328; that stretch reads DIAMKKIGLD…IAKIAAKLAV (196 aa). Residues glutamine 285, glutamate 299, and asparagine 301 each coordinate Mg(2+). 3 residues coordinate Mn(2+): glutamine 285, glutamate 299, and asparagine 301. The interval 404 to 553 is oligomerization domain; it reads VGATGFDPKV…YSTYEEECES (150 aa). The interval 554-936 is carbamoyl phosphate synthetic domain; the sequence is NPTSDRPKVM…AFSKAMLGSQ (383 aa). Residues 679–870 form the ATP-grasp 2 domain; that stretch reads QQAVNRLGLK…LAKIAARVMV (192 aa). 10 residues coordinate ATP: arginine 715, arginine 754, leucine 756, glutamate 761, glycine 786, valine 787, histidine 788, serine 789, glutamine 829, and glutamate 841. Residues glutamine 829, glutamate 841, and asparagine 843 each coordinate Mg(2+). Residues glutamine 829, glutamate 841, and asparagine 843 each contribute to the Mn(2+) site. Residues 937–1077 enclose the MGS-like domain; it reads SGMKKSGRAL…MHAKIKNMKA (141 aa). The tract at residues 937–1077 is allosteric domain; sequence SGMKKSGRAL…MHAKIKNMKA (141 aa).

It belongs to the CarB family. Composed of two chains; the small (or glutamine) chain promotes the hydrolysis of glutamine to ammonia, which is used by the large (or ammonia) chain to synthesize carbamoyl phosphate. Tetramer of heterodimers (alpha,beta)4. The cofactor is Mg(2+). It depends on Mn(2+) as a cofactor.

The enzyme catalyses hydrogencarbonate + L-glutamine + 2 ATP + H2O = carbamoyl phosphate + L-glutamate + 2 ADP + phosphate + 2 H(+). It catalyses the reaction hydrogencarbonate + NH4(+) + 2 ATP = carbamoyl phosphate + 2 ADP + phosphate + 2 H(+). The protein operates within amino-acid biosynthesis; L-arginine biosynthesis; carbamoyl phosphate from bicarbonate: step 1/1. It participates in pyrimidine metabolism; UMP biosynthesis via de novo pathway; (S)-dihydroorotate from bicarbonate: step 1/3. In terms of biological role, large subunit of the glutamine-dependent carbamoyl phosphate synthetase (CPSase). CPSase catalyzes the formation of carbamoyl phosphate from the ammonia moiety of glutamine, carbonate, and phosphate donated by ATP, constituting the first step of 2 biosynthetic pathways, one leading to arginine and/or urea and the other to pyrimidine nucleotides. The large subunit (synthetase) binds the substrates ammonia (free or transferred from glutamine from the small subunit), hydrogencarbonate and ATP and carries out an ATP-coupled ligase reaction, activating hydrogencarbonate by forming carboxy phosphate which reacts with ammonia to form carbamoyl phosphate. This Yersinia pestis protein is Carbamoyl phosphate synthase large chain.